The primary structure comprises 147 residues: MRTTYMAKPGEVERKWYVIDATDIALGRLSTVVASILRGKNKPTFTPNVDTGDNIIVINAEKIKLTGRKATDKLYHHHSNHPGGLKTRTAGEIRENNPERLIEMSVKGMLPKNSLGHNQFLKLHVYAGGEHKHQAQNPEVLDITDII.

Belongs to the universal ribosomal protein uL13 family. In terms of assembly, part of the 50S ribosomal subunit.

In terms of biological role, this protein is one of the early assembly proteins of the 50S ribosomal subunit, although it is not seen to bind rRNA by itself. It is important during the early stages of 50S assembly. The polypeptide is Large ribosomal subunit protein uL13 (Latilactobacillus sakei subsp. sakei (strain 23K) (Lactobacillus sakei subsp. sakei)).